The primary structure comprises 213 residues: NADH dehydrogenase [ubiquinone] iron-sulfur protein 7, mitochondrial (213 aa).

Residues 1–38 constitute a mitochondrion transit peptide; that stretch reads MAALSAPGLCGFRILGLRSSVGTAVQARGVHQSVATDG. The disordered stretch occupies residues 32-53; the sequence is QSVATDGPSSTQPALPKARAVA. Polar residues predominate over residues 33–44; sequence SVATDGPSSTQP. Residues cysteine 88 and cysteine 89 each contribute to the [4Fe-4S] cluster site. Arginine 111 carries the hydroxyarginine modification. [4Fe-4S] cluster-binding residues include cysteine 153 and cysteine 183.

Belongs to the complex I 20 kDa subunit family. In terms of assembly, core subunit of respiratory chain NADH dehydrogenase (Complex I) which is composed of 45 different subunits. This is a component of the iron-sulfur (IP) fragment of the enzyme. [4Fe-4S] cluster is required as a cofactor. Hydroxylated ar Arg-111 by NDUFAF5 early in the pathway of assembly of complex I, before the formation of the juncture between peripheral and membrane arms.

It localises to the mitochondrion inner membrane. The catalysed reaction is a ubiquinone + NADH + 5 H(+)(in) = a ubiquinol + NAD(+) + 4 H(+)(out). Functionally, core subunit of the mitochondrial membrane respiratory chain NADH dehydrogenase (Complex I) which catalyzes electron transfer from NADH through the respiratory chain, using ubiquinone as an electron acceptor. Essential for the catalytic activity of complex I. The sequence is that of NADH dehydrogenase [ubiquinone] iron-sulfur protein 7, mitochondrial (NDUFS7) from Gorilla gorilla gorilla (Western lowland gorilla).